The sequence spans 163 residues: MRKIALFPGSFDPMTNGHLNLIERSAKLFDEVIIGVFINTSKQTLFTPEEKKYLIEEATKEMPNVRVIMQETQLTVESAKSLGANFLIRGIRNVKDYEYEKDIAKMNQHLAPEIETVFLLAEEPYAHVSSSLLKEVLRFGGDVSDYLPPNIYHALKQKKNDWS.

ATP is bound by residues serine 10 and histidine 18. Substrate is bound at residue serine 10. Lysine 42, threonine 75, and arginine 89 together coordinate substrate. ATP is bound by residues 90 to 92, glutamate 100, and 125 to 131; these read GIR and YAHVSSS.

The protein belongs to the bacterial CoaD family. Homohexamer. Requires Mg(2+) as cofactor.

The protein resides in the cytoplasm. It carries out the reaction (R)-4'-phosphopantetheine + ATP + H(+) = 3'-dephospho-CoA + diphosphate. It functions in the pathway cofactor biosynthesis; coenzyme A biosynthesis; CoA from (R)-pantothenate: step 4/5. In terms of biological role, reversibly transfers an adenylyl group from ATP to 4'-phosphopantetheine, yielding dephospho-CoA (dPCoA) and pyrophosphate. This is Phosphopantetheine adenylyltransferase from Enterococcus faecalis (strain ATCC 700802 / V583).